A 1001-amino-acid polypeptide reads, in one-letter code: MGIGTKILSKIEKNKTSDGLTIPLTPTTQKQSSSWCSFESIKTFFRTVIRDWIFLALLGFIMASLSFGMDYAILNLQNGQMRLFDLVKEYHFTLAYLVWVGYVVGLILLSAVCAHYIAPQAIGSGIPEMKTILRGVILKEYLSVRTLLSKMIGLTLSLGSGLPMGKEGPFVHVASVVASQLTRLVHGSSGGIFENESRSGEMLAAGCAVGVACTFSAPIGGVLFSIEVTSVYFAVRNYWRGFFAATCSATLFRILRMFSVSAAVTVEAHYQTNFPPQNVFLPQELPIFALIGLVCGLAGSIFVYLHRRTVLFLRRNWLAKMIFQKYWLIYPIFIATFISSLSFPLGLGKFMGGEERFSHTMKEFFVDCAWTAPPNDSYACPMPTSNATSSDSFDIRHWKGDNYDYSPFVTLSSFQVVYFFLAILASTLPVPSGIFMPVFVLGAAFGRLVGEGVFSLDPYGHISGDIQFFVRPGVYAVVGAAAFCGAVTHTVSVAVIVFELTGQLCHLLPVMIAVLIANAVASYLQPSIYDSIIRIKNLPYLPDIPHTTSLYHQMLIEQFMISPLVYIAKDSTVGDIKRALETKTRIRAFPLVENMESLALVGSVSRSQLQRYVDSQIGTKARFAEATRRIKQRLEDEESERKRREESKSDDTEDSLETTGAGERRASRFLIVPVAKNGPQVAKNETLTGLSEENARKILTVEEKQALFDAASLATPKREMSGKTINPVHIESHHTIGDIFRSITHLSFGRQNFPKKNNHNEFDLFGEERTEWEDMMLNQKLDLSQLDIDSTPFQLSEYTSLFKAHSLFSLLGLNRAYVTKKGQLIGVVALKELRLAIEYLQSGKVPTPGMSIFNEPPTEQSIYEKSARLESGRATGDAQNAAFVTDNGEDDAQNDYIQPPLEVVRRGALTPNRMSELTRLENVRTTPESPHFEVSSPSTSSSCVSIDFSPLDAANSENGSVGGLVLNVPSLPTRARSANELTRQNTHVQINLPDDVHDEKF.

Residues 1–48 (MGIGTKILSKIEKNKTSDGLTIPLTPTTQKQSSSWCSFESIKTFFRTV) lie on the Cytoplasmic side of the membrane. Helical transmembrane passes span 49–85 (IRDW…RLFD) and 91–117 (HFTL…AHYI). Positions 123 to 127 (GSGIP) match the Selectivity filter part_1 motif. A chloride-binding site is contributed by Ser-124. The helical intramembrane region spans 126-133 (IPEMKTIL). 2 helical membrane passes run 142–160 (LSVR…SLGS) and 167–185 (EGPF…TRLV). The Selectivity filter part_2 motif lies at 165-169 (GKEGP). 2 intramembrane regions (helical) span residues 202–214 (MLAA…VACT) and 218–226 (PIGGVLFSI). 5 helical membrane-spanning segments follow: residues 238–258 (YWRG…LRMF), 285–313 (LPIF…VLFL), 322–341 (IFQK…ISSL), 405–425 (YSPF…AILA), and 433–456 (GIFM…VFSL). Residues 433–437 (GIFMP) carry the Selectivity filter part_3 motif. Chloride-binding residues include Ile-434 and Phe-435. An intramembrane region (helical) is located at residues 473–487 (GVYAVVGAAAFCGAV). The segment at residues 488–489 (TH) is an intramembrane region (note=Loop between two helices). The segment at residues 490 to 501 (TVSVAVIVFELT) is an intramembrane region (helical). The segment at residues 502–506 (GQLCH) is an intramembrane region (note=Loop between two helices). A helical membrane pass occupies residues 507–524 (LLPVMIAVLIANAVASYL). Over 525 to 1001 (QPSIYDSIIR…LPDDVHDEKF (477 aa)) the chain is Cytoplasmic. Tyr-529 provides a ligand contact to chloride. In terms of domain architecture, CBS 1 spans 560 to 619 (MISPLVYIAKDSTVGDIKRALETKTRIRAFPLVENMESLALVGSVSRSQLQRYVDSQIGT). The stretch at 625 to 657 (EATRRIKQRLEDEESERKRREESKSDDTEDSLE) forms a coiled coil. Positions 634–650 (LEDEESERKRREESKSD) are enriched in basic and acidic residues. A disordered region spans residues 634–662 (LEDEESERKRREESKSDDTEDSLETTGAG). Phosphoserine; by gck-3 occurs at positions 742 and 747. Positions 788 to 845 (IDSTPFQLSEYTSLFKAHSLFSLLGLNRAYVTKKGQLIGVVALKELRLAIEYLQSGKV) constitute a CBS 2 domain.

It belongs to the chloride channel (TC 2.A.49) family. Isoform a interacts (via RFLI motif) with gck-3 (via C-terminus). Phosphorylated by gck-3; phosphorylation at both Ser-742 and Ser-747 is required to inhibit channel activity. Dephosphorylated by gsp-1/2 during cell swelling and oocyte meiotic maturation, which results in channel activation. Expressed in excretory cell, 4 anterior epithelial cells of the intestine, hermaphrodite-specific neurons and enteric muscles. Expressed also in vulva and uterus. Isoform a is expressed in oocytes (at protein level).

It is found in the cell membrane. In terms of biological role, voltage-gated chloride channel. Insensitive to depolarizing conditioning voltages, requires low voltages for activation, insensitive to chloride levels and has a mild sensitivity to low pH. Channel gating properties are conferred by the cytoplasmic C-terminus. Plays a role in egg laying by modulating hermaphrodite-specific neurons (HSN) excitability and the ovulatory contractions of gap-junction-coupled gonadal sheath cells. When active, may prevent tubular formation of the excretory canals. Activated during oocyte meiotic maturation and by membrane hyperpolarization and cell swelling. Inhibited by Zn(2+) and to a lesser extent by Cd(2+). Voltage-gated chloride channel. Sensitive to depolarizing conditioning voltages, requires stronger voltages for activation and activation is slower, is inhibited by low concentrations of chloride and is activated by low pH. Channel gating properties are conferred by the cytoplasmic C-terminus. This Caenorhabditis elegans protein is Chloride channel protein clh-3.